The sequence spans 134 residues: UPF0102 protein Dshi_2830 (134 aa).

The protein belongs to the UPF0102 family.

The sequence is that of UPF0102 protein Dshi_2830 from Dinoroseobacter shibae (strain DSM 16493 / NCIMB 14021 / DFL 12).